Here is a 30-residue protein sequence, read N- to C-terminus: Putative UPF0377 protein YNR075C-A (30 aa).

This sequence belongs to the UPF0377 family.

The chain is Putative UPF0377 protein YNR075C-A from Saccharomyces cerevisiae (strain ATCC 204508 / S288c) (Baker's yeast).